A 227-amino-acid chain; its full sequence is Fibrillarin-like rRNA/tRNA 2'-O-methyltransferase (227 aa).

S-adenosyl-L-methionine contacts are provided by residues 82-83, 100-101, 125-126, and 145-148; these read TT, EF, DA, and DVAQ.

The protein belongs to the methyltransferase superfamily. Fibrillarin family. Interacts with nop5. Component of box C/D small ribonucleoprotein (sRNP) particles that contain rpl7ae, FlpA and nop5, plus a guide RNA.

In terms of biological role, involved in pre-rRNA and tRNA processing. Utilizes the methyl donor S-adenosyl-L-methionine to catalyze the site-specific 2'-hydroxyl methylation of ribose moieties in rRNA and tRNA. Site specificity is provided by a guide RNA that base pairs with the substrate. Methylation occurs at a characteristic distance from the sequence involved in base pairing with the guide RNA. This Methanosarcina acetivorans (strain ATCC 35395 / DSM 2834 / JCM 12185 / C2A) protein is Fibrillarin-like rRNA/tRNA 2'-O-methyltransferase.